The chain runs to 212 residues: Redox-sensing transcriptional repressor Rex (212 aa).

The H-T-H motif DNA-binding region spans 17 to 56 (KYHRYLQELMENDIDRISSKELSEKIGFTASQIRQDLNCF). 91-96 (GAGNIG) provides a ligand contact to NAD(+).

Belongs to the transcriptional regulatory Rex family. As to quaternary structure, homodimer.

Its subcellular location is the cytoplasm. Functionally, modulates transcription in response to changes in cellular NADH/NAD(+) redox state. The sequence is that of Redox-sensing transcriptional repressor Rex from Clostridium perfringens (strain SM101 / Type A).